A 365-amino-acid chain; its full sequence is Flagellar P-ring protein (365 aa).

Positions Met-1–Ala-19 are cleaved as a signal peptide.

This sequence belongs to the FlgI family. As to quaternary structure, the basal body constitutes a major portion of the flagellar organelle and consists of four rings (L,P,S, and M) mounted on a central rod.

The protein resides in the periplasm. Its subcellular location is the bacterial flagellum basal body. Functionally, assembles around the rod to form the L-ring and probably protects the motor/basal body from shearing forces during rotation. This chain is Flagellar P-ring protein, found in Escherichia fergusonii (strain ATCC 35469 / DSM 13698 / CCUG 18766 / IAM 14443 / JCM 21226 / LMG 7866 / NBRC 102419 / NCTC 12128 / CDC 0568-73).